Here is a 1205-residue protein sequence, read N- to C-terminus: PAN2-PAN3 deadenylation complex catalytic subunit Pan2 (1205 aa).

WD repeat units follow at residues 153 to 193 (DESE…QKYA), 195 to 231 (ETPGVTIMRQTNRFFFCGHTSGKVSLRDLRSFKVEHE), 244 to 280 (VHGNLLAACGFSSRLTGLACDRFLKVYDLRMMRAITP), and 328 to 367 (PVGPLLMTFDVSASKQALAFGDSEGCVHLWTDSPEPSFNP). The tract at residues 368 to 484 (YSRETEFALP…PTGREEEPLH (117 aa)) is linker. The region spanning 485-924 (TVSKKYRKVT…VPAILYYVKR (440 aa)) is the USP domain. Phosphoserine is present on Ser784. The region spanning 975–1147 (VGLDAEFVTL…EDARTALQLY (173 aa)) is the Exonuclease domain. 4 residues coordinate a divalent metal cation: Asp978, Glu980, Asp1087, and Asp1139. The tract at residues 1179-1205 (WKVPEPESQSSPKSKAGLRPGALGWVG) is disordered. Positions 1184–1193 (PESQSSPKSK) are enriched in low complexity. Residue Ser1189 is modified to Phosphoserine.

The protein belongs to the peptidase C19 family. PAN2 subfamily. Forms a heterotrimer with an asymmetric homodimer of the regulatory subunit PAN3 to form the poly(A)-nuclease (PAN) deadenylation complex. Interacts with PAN3 isoform 1/Pan3L and isoform 3/Pan3S. Interacts with ZFP36. It depends on a divalent metal cation as a cofactor.

The protein localises to the cytoplasm. The protein resides in the P-body. It is found in the nucleus. It carries out the reaction Exonucleolytic cleavage of poly(A) to 5'-AMP.. Its activity is regulated as follows. Positively regulated by the regulatory subunit PAN3. In terms of biological role, catalytic subunit of the poly(A)-nuclease (PAN) deadenylation complex, one of two cytoplasmic mRNA deadenylases involved in general and miRNA-mediated mRNA turnover. PAN specifically shortens poly(A) tails of RNA and the activity is stimulated by poly(A)-binding protein (PABP). PAN deadenylation is followed by rapid degradation of the shortened mRNA tails by the CCR4-NOT complex. Deadenylated mRNAs are then degraded by two alternative mechanisms, namely exosome-mediated 3'-5' exonucleolytic degradation, or deadenylation-dependent mRNA decaping and subsequent 5'-3' exonucleolytic degradation by XRN1. Also acts as an important regulator of the HIF1A-mediated hypoxic response. Required for HIF1A mRNA stability independent of poly(A) tail length regulation. The protein is PAN2-PAN3 deadenylation complex catalytic subunit Pan2 of Rattus norvegicus (Rat).